The following is a 354-amino-acid chain: Uroporphyrinogen decarboxylase (354 aa).

Substrate contacts are provided by residues 27 to 31 (RQAGR), Asp77, Tyr154, Thr209, and His327.

This sequence belongs to the uroporphyrinogen decarboxylase family. As to quaternary structure, homodimer.

It is found in the cytoplasm. The enzyme catalyses uroporphyrinogen III + 4 H(+) = coproporphyrinogen III + 4 CO2. It functions in the pathway porphyrin-containing compound metabolism; protoporphyrin-IX biosynthesis; coproporphyrinogen-III from 5-aminolevulinate: step 4/4. Functionally, catalyzes the decarboxylation of four acetate groups of uroporphyrinogen-III to yield coproporphyrinogen-III. This chain is Uroporphyrinogen decarboxylase, found in Pseudomonas putida (strain ATCC 700007 / DSM 6899 / JCM 31910 / BCRC 17059 / LMG 24140 / F1).